The sequence spans 157 residues: UPF0254 protein MTH_1148 (157 aa).

Belongs to the UPF0254 family.

This is UPF0254 protein MTH_1148 from Methanothermobacter thermautotrophicus (strain ATCC 29096 / DSM 1053 / JCM 10044 / NBRC 100330 / Delta H) (Methanobacterium thermoautotrophicum).